The sequence spans 680 residues: tRNA 5-methylaminomethyl-2-thiouridine biosynthesis bifunctional protein MnmC (680 aa).

The tract at residues 1–267 (MTAEPNKPCQ…MAAILSSDAP (267 aa)) is tRNA (mnm(5)s(2)U34)-methyltransferase. The segment at 273-680 (IGGGLASAHL…LRKLLKGKSL (408 aa)) is FAD-dependent cmnm(5)s(2)U34 oxidoreductase.

This sequence in the N-terminal section; belongs to the methyltransferase superfamily. tRNA (mnm(5)s(2)U34)-methyltransferase family. It in the C-terminal section; belongs to the DAO family. FAD is required as a cofactor.

The protein resides in the cytoplasm. It catalyses the reaction 5-aminomethyl-2-thiouridine(34) in tRNA + S-adenosyl-L-methionine = 5-methylaminomethyl-2-thiouridine(34) in tRNA + S-adenosyl-L-homocysteine + H(+). Functionally, catalyzes the last two steps in the biosynthesis of 5-methylaminomethyl-2-thiouridine (mnm(5)s(2)U) at the wobble position (U34) in tRNA. Catalyzes the FAD-dependent demodification of cmnm(5)s(2)U34 to nm(5)s(2)U34, followed by the transfer of a methyl group from S-adenosyl-L-methionine to nm(5)s(2)U34, to form mnm(5)s(2)U34. The polypeptide is tRNA 5-methylaminomethyl-2-thiouridine biosynthesis bifunctional protein MnmC (Shewanella sp. (strain W3-18-1)).